Here is a 98-residue protein sequence, read N- to C-terminus: NADH-ubiquinone oxidoreductase chain 4L (98 aa).

3 helical membrane-spanning segments follow: residues 1-21, 29-49, and 61-81; these read MSLVYMNIMTAFMVSLAGLLM, SLLCLEGMMLSLFVLATLTIL, and IILLVFAACEAALGLSLLVMV.

This sequence belongs to the complex I subunit 4L family. Core subunit of respiratory chain NADH dehydrogenase (Complex I) which is composed of 45 different subunits.

It localises to the mitochondrion inner membrane. The catalysed reaction is a ubiquinone + NADH + 5 H(+)(in) = a ubiquinol + NAD(+) + 4 H(+)(out). In terms of biological role, core subunit of the mitochondrial membrane respiratory chain NADH dehydrogenase (Complex I) which catalyzes electron transfer from NADH through the respiratory chain, using ubiquinone as an electron acceptor. Part of the enzyme membrane arm which is embedded in the lipid bilayer and involved in proton translocation. This chain is NADH-ubiquinone oxidoreductase chain 4L (MT-ND4L), found in Muntiacus feae (Fea's muntjac).